The chain runs to 543 residues: T-complex protein 1 subunit eta (543 aa).

Methionine 1 carries the N-acetylmethionine modification. ADP is bound at residue glycine 41. Glycine 41 contributes to the ATP binding site. Position 67 is an N6-acetyllysine (lysine 67). Aspartate 92 is a Mg(2+) binding site. Residues glycine 93, threonine 94, threonine 95, serine 96, serine 164, and serine 165 each coordinate ADP. Glycine 93 lines the ATP pocket. Serine 96 serves as a coordination point for ATP. N6-acetyllysine occurs at positions 250 and 320. ATP is bound by residues arginine 398 and glycine 409. An ADP-binding site is contributed by glycine 409. Residue lysine 430 forms a Glycyl lysine isopeptide (Lys-Gly) (interchain with G-Cter in SUMO2) linkage. Positions 494 and 499 each coordinate ADP. An ATP-binding site is contributed by arginine 499. Omega-N-methylarginine is present on arginine 535.

It belongs to the TCP-1 chaperonin family. Component of the chaperonin-containing T-complex (TRiC), a hexadecamer composed of two identical back-to-back stacked rings enclosing a protein folding chamber. Each ring is made up of eight different subunits: TCP1/CCT1, CCT2, CCT3, CCT4, CCT5, CCT6A/CCT6, CCT7, CCT8. Interacts with PACRG. Interacts with DLEC1.

It is found in the cytoplasm. The enzyme catalyses ATP + H2O = ADP + phosphate + H(+). Its function is as follows. Component of the chaperonin-containing T-complex (TRiC), a molecular chaperone complex that assists the folding of actin, tubulin and other proteins upon ATP hydrolysis. The TRiC complex mediates the folding of WRAP53/TCAB1, thereby regulating telomere maintenance. This Pongo abelii (Sumatran orangutan) protein is T-complex protein 1 subunit eta (CCT7).